Reading from the N-terminus, the 344-residue chain is Galactinol synthase 1 (344 aa).

Lysine 111 is an active-site residue. Mn(2+) is bound by residues aspartate 127, aspartate 129, and histidine 265.

This sequence belongs to the glycosyltransferase 8 family. Galactosyltransferase subfamily. It depends on a divalent metal cation as a cofactor. Accumulates in mature seeds. Expressed in seedlings (axes and cotyledons), meristems, vascular tissues and emerging lateral roots. Present in abscission zones.

The protein localises to the cytoplasm. The catalysed reaction is myo-inositol + UDP-alpha-D-galactose = alpha-D-galactosyl-(1-&gt;3)-1D-myo-inositol + UDP + H(+). Its function is as follows. Galactinol synthase involved in the biosynthesis of raffinose family oligosaccharides (RFOs) that function as osmoprotectants. Promotes plant stress tolerance such as heat, chilling, salinity and methylviologen (MV), a superoxide radical generating drug, by mediating raffinose accumulation, an osmoprotective substance. This Arabidopsis thaliana (Mouse-ear cress) protein is Galactinol synthase 1 (GOLS1).